Here is a 354-residue protein sequence, read N- to C-terminus: tRNA-specific 2-thiouridylase MnmA (354 aa).

ATP contacts are provided by residues 6 to 13 (LLSGGVDS) and Leu-33. Catalysis depends on Cys-100, which acts as the Nucleophile. Residues Cys-100 and Cys-195 are joined by a disulfide bond. Gly-123 serves as a coordination point for ATP. Residues 145–147 (KDQ) form an interaction with tRNA region. Cys-195 functions as the Cysteine persulfide intermediate in the catalytic mechanism.

Belongs to the MnmA/TRMU family.

The protein localises to the cytoplasm. It carries out the reaction S-sulfanyl-L-cysteinyl-[protein] + uridine(34) in tRNA + AH2 + ATP = 2-thiouridine(34) in tRNA + L-cysteinyl-[protein] + A + AMP + diphosphate + H(+). In terms of biological role, catalyzes the 2-thiolation of uridine at the wobble position (U34) of tRNA, leading to the formation of s(2)U34. The chain is tRNA-specific 2-thiouridylase MnmA from Borrelia turicatae (strain 91E135).